The following is a 376-amino-acid chain: Chaperone protein DnaJ (376 aa).

A J domain is found at 5–70 (DYYEVLGVGR…DKKAAYDQFG (66 aa)). The CR-type zinc-finger motif lies at 132 to 210 (GLTKELRIPT…CHGEGRVEKS (79 aa)). 8 residues coordinate Zn(2+): Cys-145, Cys-148, Cys-162, Cys-165, Cys-184, Cys-187, Cys-198, and Cys-201. CXXCXGXG motif repeat units follow at residues 145 to 152 (CDSCDGSG), 162 to 169 (CGTCHGQG), 184 to 191 (CPTCHGRG), and 198 to 205 (CNKCHGEG).

It belongs to the DnaJ family. As to quaternary structure, homodimer. The cofactor is Zn(2+).

It is found in the cytoplasm. Functionally, participates actively in the response to hyperosmotic and heat shock by preventing the aggregation of stress-denatured proteins and by disaggregating proteins, also in an autonomous, DnaK-independent fashion. Unfolded proteins bind initially to DnaJ; upon interaction with the DnaJ-bound protein, DnaK hydrolyzes its bound ATP, resulting in the formation of a stable complex. GrpE releases ADP from DnaK; ATP binding to DnaK triggers the release of the substrate protein, thus completing the reaction cycle. Several rounds of ATP-dependent interactions between DnaJ, DnaK and GrpE are required for fully efficient folding. Also involved, together with DnaK and GrpE, in the DNA replication of plasmids through activation of initiation proteins. In Shewanella pealeana (strain ATCC 700345 / ANG-SQ1), this protein is Chaperone protein DnaJ.